Here is a 218-residue protein sequence, read N- to C-terminus: MRLRKKPWARPALEACSFFVINPTEYKGKWREVFGNSNEIWLELGCGKGGFISKLASTNPDKNFIAVDIKDEVLALAMKKIENEYALIGAETKNIRLMAHEIMLIHRMLDENDQIGRIFINFCNPWPKNRHKARRLTHPNQLNQYRTFLAPNGQIWFKTDDTMLFQDSIKYFEQCNFNIVYLTEDLHASGFEGNIETEHERMFLEQGCKIKFLIAEKK.

S-adenosyl-L-methionine is bound by residues E43, D68, E101, and N124. K128 and D160 together coordinate substrate.

This sequence belongs to the class I-like SAM-binding methyltransferase superfamily. TrmB family.

It carries out the reaction guanosine(46) in tRNA + S-adenosyl-L-methionine = N(7)-methylguanosine(46) in tRNA + S-adenosyl-L-homocysteine. It functions in the pathway tRNA modification; N(7)-methylguanine-tRNA biosynthesis. Its function is as follows. Catalyzes the formation of N(7)-methylguanine at position 46 (m7G46) in tRNA. This is tRNA (guanine-N(7)-)-methyltransferase from Acetivibrio thermocellus (strain ATCC 27405 / DSM 1237 / JCM 9322 / NBRC 103400 / NCIMB 10682 / NRRL B-4536 / VPI 7372) (Clostridium thermocellum).